The following is a 585-amino-acid chain: Formate--tetrahydrofolate ligase (585 aa).

Position 65 to 72 (65 to 72) interacts with ATP; that stretch reads TPHGEGKT.

This sequence belongs to the formate--tetrahydrofolate ligase family.

The catalysed reaction is (6S)-5,6,7,8-tetrahydrofolate + formate + ATP = (6R)-10-formyltetrahydrofolate + ADP + phosphate. It participates in one-carbon metabolism; tetrahydrofolate interconversion. The polypeptide is Formate--tetrahydrofolate ligase (Shewanella baltica (strain OS155 / ATCC BAA-1091)).